A 903-amino-acid polypeptide reads, in one-letter code: DNA transposase THAP9 (903 aa).

The THAP-type zinc finger occupies 1–89 (MTRSCSAVGC…LKKGAVPSVS (89 aa)). An HCFC1-binding motif (HBM) motif is present at residues 123 to 126 (DHNY).

Its function is as follows. Active transposase that specifically recognizes the bipartite 5'-TXXGGGX(A/T)-3' consensus motif and mediates transposition. In Homo sapiens (Human), this protein is DNA transposase THAP9 (THAP9).